A 474-amino-acid chain; its full sequence is Cell division protein FtsP (474 aa).

The tat-type signal signal peptide spans 1-27 (MSLSRRQFIQAAGLALGAGSLPLRAQA). A Plastocyanin-like domain is found at 229 to 288 (WVRLRLLNASNARRYTLQLSDGRPLYVVASDQGFLPAPVAVQQLSLAPGERREVVIDMSQ).

It belongs to the FtsP family. In terms of processing, predicted to be exported by the Tat system. The position of the signal peptide cleavage has not been experimentally proven.

The protein localises to the periplasm. In terms of biological role, cell division protein that is required for growth during stress conditions. May be involved in protecting or stabilizing the divisomal assembly under conditions of stress. This is Cell division protein FtsP from Yersinia pestis.